A 289-amino-acid polypeptide reads, in one-letter code: Ribosomal RNA small subunit methyltransferase A (289 aa).

S-adenosyl-L-methionine-binding residues include N21, L23, G48, E69, D94, and N120.

Belongs to the class I-like SAM-binding methyltransferase superfamily. rRNA adenine N(6)-methyltransferase family. RsmA subfamily.

The protein localises to the cytoplasm. It carries out the reaction adenosine(1518)/adenosine(1519) in 16S rRNA + 4 S-adenosyl-L-methionine = N(6)-dimethyladenosine(1518)/N(6)-dimethyladenosine(1519) in 16S rRNA + 4 S-adenosyl-L-homocysteine + 4 H(+). Its function is as follows. Specifically dimethylates two adjacent adenosines (A1518 and A1519) in the loop of a conserved hairpin near the 3'-end of 16S rRNA in the 30S particle. May play a critical role in biogenesis of 30S subunits. The chain is Ribosomal RNA small subunit methyltransferase A from Haemophilus ducreyi (strain 35000HP / ATCC 700724).